A 359-amino-acid chain; its full sequence is Pyruvate dehydrogenase E1 component subunit beta, mitochondrial (359 aa).

Residues 1-30 (MAAVSGLVRRPLREVSRLLKRRFHWTAPAA) constitute a mitochondrion transit peptide. Tyr67 carries the phosphotyrosine modification. Residue Glu89 participates in thiamine diphosphate binding. Residues Ile142, Ala190, Ile191, Asp193, and Asn195 each coordinate K(+). Lys354 carries the post-translational modification N6-acetyllysine.

As to quaternary structure, heterotetramer of two PDHA1 and two PDHB subunits. The heterotetramer interacts with DLAT, and is part of the multimeric pyruvate dehydrogenase complex that contains multiple copies of pyruvate dehydrogenase (E1), dihydrolipoamide acetyltransferase (DLAT, E2) and lipoamide dehydrogenase (DLD, E3). These subunits are bound to an inner core composed of about 48 DLAT and 12 PDHX molecules. Interacts with DLAT. The cofactor is thiamine diphosphate.

The protein localises to the mitochondrion matrix. The catalysed reaction is N(6)-[(R)-lipoyl]-L-lysyl-[protein] + pyruvate + H(+) = N(6)-[(R)-S(8)-acetyldihydrolipoyl]-L-lysyl-[protein] + CO2. Its function is as follows. The pyruvate dehydrogenase complex catalyzes the overall conversion of pyruvate to acetyl-CoA and CO(2), and thereby links the glycolytic pathway to the tricarboxylic cycle. The polypeptide is Pyruvate dehydrogenase E1 component subunit beta, mitochondrial (PDHB) (Pongo abelii (Sumatran orangutan)).